Reading from the N-terminus, the 252-residue chain is 2-succinyl-6-hydroxy-2,4-cyclohexadiene-1-carboxylate synthase (252 aa).

The protein belongs to the AB hydrolase superfamily. MenH family. As to quaternary structure, monomer.

It catalyses the reaction 5-enolpyruvoyl-6-hydroxy-2-succinyl-cyclohex-3-ene-1-carboxylate = (1R,6R)-6-hydroxy-2-succinyl-cyclohexa-2,4-diene-1-carboxylate + pyruvate. Its pathway is quinol/quinone metabolism; 1,4-dihydroxy-2-naphthoate biosynthesis; 1,4-dihydroxy-2-naphthoate from chorismate: step 3/7. The protein operates within quinol/quinone metabolism; menaquinone biosynthesis. Functionally, catalyzes a proton abstraction reaction that results in 2,5-elimination of pyruvate from 2-succinyl-5-enolpyruvyl-6-hydroxy-3-cyclohexene-1-carboxylate (SEPHCHC) and the formation of 2-succinyl-6-hydroxy-2,4-cyclohexadiene-1-carboxylate (SHCHC). The polypeptide is 2-succinyl-6-hydroxy-2,4-cyclohexadiene-1-carboxylate synthase (Shigella boydii serotype 4 (strain Sb227)).